The primary structure comprises 296 residues: Bidirectional sugar transporter SWEET13 (296 aa).

At Met-1–Pro-9 the chain is on the extracellular side. A helical transmembrane segment spans residues Trp-10–Ile-30. The region spanning Ala-13–Lys-98 is the MtN3/slv 1 domain. Topologically, residues Pro-31–Phe-45 are cytoplasmic. A helical membrane pass occupies residues Gln-46–Ile-66. At Lys-67–Ala-71 the chain is on the extracellular side. Residues Leu-72 to Leu-92 traverse the membrane as a helical segment. Topologically, residues Ala-93–Lys-105 are cytoplasmic. A helical membrane pass occupies residues Ile-106–Ser-126. The Extracellular portion of the chain corresponds to His-127–Val-133. A helical transmembrane segment spans residues Ser-134–Ile-154. In terms of domain architecture, MtN3/slv 2 spans Ser-134–Ala-217. Residues Lys-155–Pro-167 lie on the Cytoplasmic side of the membrane. A helical transmembrane segment spans residues Phe-168–Ile-188. Residues Lys-189–Tyr-192 lie on the Extracellular side of the membrane. A helical transmembrane segment spans residues Val-193–Phe-213. The Cytoplasmic portion of the chain corresponds to Tyr-214–Val-296.

This sequence belongs to the SWEET sugar transporter family. In terms of assembly, forms homooligomers and/or heterooligomers.

The protein localises to the cell membrane. In terms of biological role, mediates both low-affinity uptake and efflux of sugar across the plasma membrane. Confers blight susceptibility. Confers TAL effector-mediated susceptibility to Xanthomonas oryzae pv. oryzae. The polypeptide is Bidirectional sugar transporter SWEET13 (SWEET13) (Oryza sativa subsp. japonica (Rice)).